The chain runs to 379 residues: MPAVTYEHIKTCKQSGARLGIVHTPHGSFETPMFMPVGTKATVKTMSPEELRQIEAKIILGNTYHLWLQPGNDIIKQVGGLHNFMNWDGPILTDSGGFQVFSLSNLRKITEESVEFRHHTNGLKLFLSPEKSMEIQNDLGSDIMMAFDECPPMPSEYKYVKDSIERTTRWAERCLNAHKRPEDQALFGIIQGGEYKDLREQSAKELVALDFPGYAIGGLSVGEPKPVMYEMVEHTVQYMPDDKPRYLMGVGSPDALIECSIRGMDMFDCVLPTRIARNGTCMTSNGRLVIKNAKYANDFKPLDENCDCYTCKNYSRAYIRHLIKAEETFGIRLTTIHNLHFLLKLMEDIRQAIREDRLLDFKDEFFEQYGLNVENPKNF.

Asp94 (proton acceptor) is an active-site residue. Residues 94–98 (DSGGF), Asp148, Gln191, and Gly218 contribute to the substrate site. Residues 249-255 (GVGSPDA) are RNA binding. The active-site Nucleophile is the Asp268. An RNA binding; important for wobble base 34 recognition region spans residues 273 to 277 (TRIAR). The Zn(2+) site is built by Cys306, Cys308, Cys311, and His337.

It belongs to the queuine tRNA-ribosyltransferase family. As to quaternary structure, homodimer. Within each dimer, one monomer is responsible for RNA recognition and catalysis, while the other monomer binds to the replacement base PreQ1. Zn(2+) serves as cofactor.

It catalyses the reaction 7-aminomethyl-7-carbaguanine + guanosine(34) in tRNA = 7-aminomethyl-7-carbaguanosine(34) in tRNA + guanine. It functions in the pathway tRNA modification; tRNA-queuosine biosynthesis. Its function is as follows. Catalyzes the base-exchange of a guanine (G) residue with the queuine precursor 7-aminomethyl-7-deazaguanine (PreQ1) at position 34 (anticodon wobble position) in tRNAs with GU(N) anticodons (tRNA-Asp, -Asn, -His and -Tyr). Catalysis occurs through a double-displacement mechanism. The nucleophile active site attacks the C1' of nucleotide 34 to detach the guanine base from the RNA, forming a covalent enzyme-RNA intermediate. The proton acceptor active site deprotonates the incoming PreQ1, allowing a nucleophilic attack on the C1' of the ribose to form the product. After dissociation, two additional enzymatic reactions on the tRNA convert PreQ1 to queuine (Q), resulting in the hypermodified nucleoside queuosine (7-(((4,5-cis-dihydroxy-2-cyclopenten-1-yl)amino)methyl)-7-deazaguanosine). The sequence is that of Queuine tRNA-ribosyltransferase from Staphylococcus haemolyticus (strain JCSC1435).